A 438-amino-acid chain; its full sequence is (3,5-dihydroxyphenyl)acetyl-CoA 1,2-dioxygenase (438 aa).

Residues D183, E189, 222 to 225, 233 to 238, G296, 325 to 327, and Q416 each bind substrate; these read HPRY, AGINLK, and IPG.

It belongs to the enoyl-CoA hydratase/isomerase family. As to quaternary structure, homohexamer; dimer of trimers.

It carries out the reaction (3,5-dihydroxyphenyl)acetyl-CoA + O2 = 2-(3,5-dihydroxyphenyl)-2-oxoacetate + CoA + H(+). Its activity is regulated as follows. Inhibited by DPA-S-(N-acetylcysteamine). Functionally, involved in the biosynthesis of the nonproteinogenic amino acid monomer (S)-3,5-dihydroxyphenylglycine (Dpg) responsible of the production of vancomycin and teicoplanin antibiotics. Catalyzes the unusual conversion 3,5-dihydroxyphenylacetyl-CoA (DPA-CoA) to 3,5-dihydroxyphenylglyoxylate. DpgC performed a net four-electron oxidation of the benzylic carbon of DPA-CoA and the hydrolysis of the thioester bond to generate free CoA. DpgC has the ability to process a diverse range of substituted phenylacetyl-CoA substrates. The chain is (3,5-dihydroxyphenyl)acetyl-CoA 1,2-dioxygenase from Streptomyces toyocaensis.